Reading from the N-terminus, the 471-residue chain is Proline and serine-rich protein 2 (471 aa).

Disordered regions lie at residues 1–46 (MPGN…SFTM) and 82–247 (CDSG…GDHV). Positions 26–43 (LSRGGSLESRCSSSRSRS) are enriched in low complexity. A Phosphoserine modification is found at serine 43. Threonine 45 carries the phosphothreonine modification. Low complexity predominate over residues 90–101 (SPQSLEESPSSH). The segment covering 154-177 (LPPPDSRGPEVFPLPPSLPVPAPS) has biased composition (pro residues). A phosphoserine mark is found at serine 187, serine 220, and serine 223. Asymmetric dimethylarginine; alternate is present on arginine 263. Omega-N-methylarginine; alternate is present on arginine 263. Disordered regions lie at residues 310–365 (DTSS…TEQP) and 383–437 (PSSF…RAVG). Basic and acidic residues predominate over residues 313–324 (SEERWQKAEEQR). 2 stretches are compositionally biased toward polar residues: residues 354 to 364 (AQQSRAVQTEQ) and 383 to 393 (PSSFVPTSKTI). A compositionally biased stretch (basic and acidic residues) spans 415–427 (YEPRPDGSQDARK). Serine 431 is subject to Phosphoserine. Arginine 450 carries the omega-N-methylarginine modification.

This chain is Proline and serine-rich protein 2 (Proser2), found in Mus musculus (Mouse).